A 257-amino-acid polypeptide reads, in one-letter code: Pyridoxine 5'-phosphate synthase (257 aa).

Asn6 contributes to the 3-amino-2-oxopropyl phosphate binding site. A 1-deoxy-D-xylulose 5-phosphate-binding site is contributed by Asp8–His9. Residue Arg17 participates in 3-amino-2-oxopropyl phosphate binding. The active-site Proton acceptor is the His42. 1-deoxy-D-xylulose 5-phosphate-binding residues include Arg44 and His49. The active-site Proton acceptor is Glu69. Thr99 lines the 1-deoxy-D-xylulose 5-phosphate pocket. His211 (proton donor) is an active-site residue. 3-amino-2-oxopropyl phosphate-binding positions include Gly212 and Gly233 to Gln234.

Belongs to the PNP synthase family. Homooctamer; tetramer of dimers.

It is found in the cytoplasm. It catalyses the reaction 3-amino-2-oxopropyl phosphate + 1-deoxy-D-xylulose 5-phosphate = pyridoxine 5'-phosphate + phosphate + 2 H2O + H(+). It participates in cofactor biosynthesis; pyridoxine 5'-phosphate biosynthesis; pyridoxine 5'-phosphate from D-erythrose 4-phosphate: step 5/5. In terms of biological role, catalyzes the complicated ring closure reaction between the two acyclic compounds 1-deoxy-D-xylulose-5-phosphate (DXP) and 3-amino-2-oxopropyl phosphate (1-amino-acetone-3-phosphate or AAP) to form pyridoxine 5'-phosphate (PNP) and inorganic phosphate. The chain is Pyridoxine 5'-phosphate synthase from Campylobacter fetus subsp. fetus (strain 82-40).